Here is a 937-residue protein sequence, read N- to C-terminus: Molybdenum cofactor sulfurase (937 aa).

K237 is subject to N6-(pyridoxal phosphate)lysine. Residue C397 is part of the active site. Disordered regions lie at residues 633-710 (GQGK…RRIL), 756-795 (PSPS…KLNP), and 897-921 (KEGT…GGNG). The span at 638–652 (MTRHAKAHLQRHQHQ) shows a compositional bias: basic residues. One can recognise an MOSC domain in the interval 682–935 (TPPSPPDSDT…VRVGDVVRPS (254 aa)). Residues 756–767 (PSPSTPSASPSN) show a composition bias toward low complexity. The segment covering 900 to 921 (TGMGMGTGTGTGTGTRSMGGNG) has biased composition (gly residues).

It belongs to the class-V pyridoxal-phosphate-dependent aminotransferase family. MOCOS subfamily. The cofactor is pyridoxal 5'-phosphate.

It catalyses the reaction Mo-molybdopterin + L-cysteine + AH2 = thio-Mo-molybdopterin + L-alanine + A + H2O. It participates in cofactor biosynthesis; molybdopterin biosynthesis. Functionally, sulfurates the molybdenum cofactor. Sulfation of molybdenum is essential for xanthine dehydrogenase (XDH) and aldehyde oxidase (ADO) enzymes in which molybdenum cofactor is liganded by 1 oxygen and 1 sulfur atom in active form. The polypeptide is Molybdenum cofactor sulfurase (nit-13) (Neurospora crassa (strain ATCC 24698 / 74-OR23-1A / CBS 708.71 / DSM 1257 / FGSC 987)).